A 463-amino-acid chain; its full sequence is Fumarate hydratase class II (463 aa).

Residues 98 to 100 (SGT), 129 to 132 (HPND), 139 to 141 (SSN), and Thr187 contribute to the substrate site. Catalysis depends on His188, which acts as the Proton donor/acceptor. Ser318 is an active-site residue. Substrate-binding positions include Ser319 and 324 to 326 (KVN).

This sequence belongs to the class-II fumarase/aspartase family. Fumarase subfamily. Homotetramer.

It is found in the cytoplasm. The catalysed reaction is (S)-malate = fumarate + H2O. It participates in carbohydrate metabolism; tricarboxylic acid cycle; (S)-malate from fumarate: step 1/1. Functionally, involved in the TCA cycle. Catalyzes the stereospecific interconversion of fumarate to L-malate. This is Fumarate hydratase class II from Rhizobium meliloti (strain 1021) (Ensifer meliloti).